The sequence spans 542 residues: Organic anion transporter 3 (542 aa).

Residues 1–9 (MTFSEILDR) lie on the Cytoplasmic side of the membrane. The residue at position 4 (Ser4) is a Phosphoserine. The chain crosses the membrane as a helical span at residues 10–30 (VGSMGHFQFLHVAILGLPILN). Residues 31 to 123 (MANHNLLQIF…LVCNSNKLKE (93 aa)) lie on the Extracellular side of the membrane. N-linked (GlcNAc...) asparagine glycosylation is found at Asn86 and Asn102. A helical transmembrane segment spans residues 124–144 (MAQSIFMAGILIGGLVLGDLS). Topologically, residues 145-154 (DRFGRRPILT) are cytoplasmic. The chain crosses the membrane as a helical span at residues 155-175 (CSYLLLAASGSGAAFSPTFPI). Residue Tyr176 is a topological domain, extracellular. A helical transmembrane segment spans residues 177-197 (MVFRFLCGFGISGITLSTVIL). Topologically, residues 198–212 (NVEWVPTRMRAIMST) are cytoplasmic. Residues 213-233 (ALGYCYTFGQFILPGLAYAIP) form a helical membrane-spanning segment. Topologically, residues 234–236 (QWR) are extracellular. Residues 237 to 257 (WLQLTVSIPFFVFFLSSWWTP) form a helical membrane-spanning segment. The Cytoplasmic portion of the chain corresponds to 258–327 (ESIRWLVLSG…FRIPMLRRMT (70 aa)). A helical membrane pass occupies residues 328–348 (FCLSLAWFATGFAYYSLAMGV). Residues 349-354 (EEFGVN) are Extracellular-facing. A helical membrane pass occupies residues 355-375 (LYILQIIFGGVDVPAKFITIL). The Cytoplasmic segment spans residues 376-386 (SLSYLGRHTTQ). Residues 387-407 (AAALLLAGGAILALTFVPLDL) form a helical membrane-spanning segment. The Extracellular portion of the chain corresponds to 408–411 (QTVR). The chain crosses the membrane as a helical span at residues 412-432 (TVLAVFGKGCLSSSFSCLFLY). The Cytoplasmic portion of the chain corresponds to 433-471 (TSELYPTVIRQTGMGVSNLWTRVGSMVSPLVKITGEVQP). A helical membrane pass occupies residues 472 to 492 (FIPNIIYGITALLGGSAALFL). Residues 493–542 (PETLNQPLPETIEDLENWSLRAKKPKQEPEVEKASQRIPLQPHGPGLGSS) lie on the Extracellular side of the membrane. The segment at 515-542 (KKPKQEPEVEKASQRIPLQPHGPGLGSS) is disordered. Residues 517-527 (PKQEPEVEKAS) show a composition bias toward basic and acidic residues.

Belongs to the major facilitator (TC 2.A.1) superfamily. Organic cation transporter (TC 2.A.1.19) family. As to expression, strongly expressed in kidney. Weaker expression in brain and skeletal muscle. Expressed in adrenal glands.

The protein resides in the basolateral cell membrane. It carries out the reaction estrone 3-sulfate(out) + glutarate(in) = estrone 3-sulfate(in) + glutarate(out). The enzyme catalyses estrone 3-sulfate(in) + 2-oxoglutarate(out) = estrone 3-sulfate(out) + 2-oxoglutarate(in). It catalyses the reaction glutarate(in) + 2-oxoglutarate(out) = glutarate(out) + 2-oxoglutarate(in). The catalysed reaction is urate(in) + 2-oxoglutarate(out) = urate(out) + 2-oxoglutarate(in). It carries out the reaction taurocholate(out) + glutarate(in) = taurocholate(in) + glutarate(out). The enzyme catalyses dehydroepiandrosterone 3-sulfate(out) + glutarate(in) = dehydroepiandrosterone 3-sulfate(in) + glutarate(out). It catalyses the reaction prostaglandin F2alpha(out) + glutarate(in) = prostaglandin F2alpha(in) + glutarate(out). The catalysed reaction is prostaglandin F2alpha(out) + 2-oxoglutarate(in) = prostaglandin F2alpha(in) + 2-oxoglutarate(out). It carries out the reaction (R)-carnitine(out) + 2-oxoglutarate(in) = (R)-carnitine(in) + 2-oxoglutarate(out). The enzyme catalyses glutarate(in) + (R)-carnitine(out) = glutarate(out) + (R)-carnitine(in). It catalyses the reaction prostaglandin E2(out) + 2-oxoglutarate(in) = prostaglandin E2(in) + 2-oxoglutarate(out). The catalysed reaction is prostaglandin E2(out) + glutarate(in) = prostaglandin E2(in) + glutarate(out). It carries out the reaction urate(in) + glutarate(out) = urate(out) + glutarate(in). The enzyme catalyses taurocholate(out) + 2-oxoglutarate(in) = taurocholate(in) + 2-oxoglutarate(out). It catalyses the reaction dehydroepiandrosterone 3-sulfate(out) + 2-oxoglutarate(in) = dehydroepiandrosterone 3-sulfate(in) + 2-oxoglutarate(out). The catalysed reaction is kynurenate(out) + a dicarboxylate(in) = kynurenate(in) + a dicarboxylate(out). It carries out the reaction (indol-3-yl)acetate(out) + a dicarboxylate(in) = (indol-3-yl)acetate(in) + a dicarboxylate(out). The enzyme catalyses indoxyl sulfate(out) + a dicarboxylate(in) = indoxyl sulfate(in) + a dicarboxylate(out). It catalyses the reaction N-benzoylglycine(out) + a dicarboxylate(in) = N-benzoylglycine(in) + a dicarboxylate(out). The catalysed reaction is 3-carboxy-4-methyl-5-propyl-2-furanpropanoate(out) + a dicarboxylate(in) = 3-carboxy-4-methyl-5-propyl-2-furanpropanoate(in) + a dicarboxylate(out). It carries out the reaction (6R)-L-erythro-5,6,7,8-tetrahydrobiopterin(out) + a dicarboxylate(in) = (6R)-L-erythro-5,6,7,8-tetrahydrobiopterin(in) + a dicarboxylate(out). The enzyme catalyses L-erythro-7,8-dihydrobiopterin(out) + a dicarboxylate(in) = L-erythro-7,8-dihydrobiopterin(in) + a dicarboxylate(out). It catalyses the reaction L-sepiapterin(out) + a dicarboxylate(in) = L-sepiapterin(in) + a dicarboxylate(out). Functions as an organic anion/dicarboxylate exchanger that couples organic anion uptake indirectly to the sodium gradient. Transports organic anions such as estrone 3-sulfate (E1S) and urate in exchange for dicarboxylates such as glutarate or ketoglutarate (2-oxoglutarate). Plays an important role in the excretion of endogenous and exogenous organic anions, especially from the kidney and the brain. E1S transport is pH- and chloride-dependent and may also involve E1S/cGMP exchange. Responsible for the transport of prostaglandin E2 (PGE2) and prostaglandin F2(alpha) (PGF2(alpha)) in the basolateral side of the renal tubule. Involved in the transport of neuroactive tryptophan metabolites kynurenate and xanthurenate. Functions as a biopterin transporters involved in the uptake and the secretion of coenzymes tetrahydrobiopterin (BH4), dihydrobiopterin (BH2) and sepiapterin to urine, thereby determining baseline levels of blood biopterins. May be involved in the basolateral transport of steviol, a metabolite of the popular sugar substitute stevioside. May participate in the detoxification/ renal excretion of drugs and xenobiotics, such as the histamine H(2)-receptor antagonists fexofenadine and cimetidine, the antibiotic benzylpenicillin (PCG), the anionic herbicide 2,4-dichloro-phenoxyacetate (2,4-D), the diagnostic agent p-aminohippurate (PAH), the antiviral acyclovir (ACV), and the mycotoxin ochratoxin (OTA), by transporting these exogenous organic anions across the cell membrane in exchange for dicarboxylates such as 2-oxoglutarate. Contributes to the renal uptake of potent uremic toxins (indoxyl sulfate (IS), indole acetate (IA), hippurate/N-benzoylglycine (HA) and 3-carboxy-4-methyl-5-propyl-2-furanpropionate (CMPF)), pravastatin, PCG, E1S and dehydroepiandrosterone sulfate (DHEAS), and is partly involved in the renal uptake of temocaprilat (an angiotensin-converting enzyme (ACE) inhibitor). May contribute to the release of cortisol in the adrenals. Involved in one of the detoxification systems on the choroid plexus (CP), removes substrates such as E1S or taurocholate (TC), PCG, 2,4-D and PAH, from the cerebrospinal fluid (CSF) to the blood for eventual excretion in urine and bile. Also contributes to the uptake of several other organic compounds such as the prostanoids prostaglandin E(2) and prostaglandin F(2-alpha), L-carnitine, and the therapeutic drugs allopurinol, 6-mercaptopurine (6-MP) and 5-fluorouracil (5-FU). Mediates the transport of PAH, PCG, and the statins pravastatin and pitavastatin, from the cerebrum into the blood circulation across the blood-brain barrier (BBB). In summary, plays a role in the efflux of drugs and xenobiotics, helping reduce their undesired toxicological effects on the body. This Homo sapiens (Human) protein is Organic anion transporter 3.